Consider the following 209-residue polypeptide: T-cell surface glycoprotein CD8 beta chain (209 aa).

A signal peptide spans 1 to 21 (MRPRMWLLLSAQLAALHGNSV). The Ig-like V-type domain maps to 22–131 (LQQTPAYIMV…TLIFGTGTQL (110 aa)). The Extracellular portion of the chain corresponds to 22–169 (LQQTPAYIMV…ETRKGPLCSP (148 aa)). A disulfide bond links Cys41 and Cys115. N-linked (GlcNAc...) asparagine glycosylation occurs at Asn101. A helical membrane pass occupies residues 170–190 (ITLSLLVAGILVLLVSLGVAI). Over 191-209 (HLYCRQRRARLRFMKQFYK) the chain is Cytoplasmic.

In terms of assembly, forms disulfide-linked heterodimers with CD8A at the cell surface. Interacts with CD3D; this interaction couples TCR-CD3 with CD8. Interacts with LCK. Post-translationally, phosphorylated as a consequence of T-cell activation. Palmitoylated at the cytoplasmic tail and thereby targets the heterodimer CD8A/CD8B to lipid rafts unlike CD8A homodimers.

It localises to the cell membrane. Its function is as follows. Integral membrane glycoprotein that plays an essential role in the immune response and serves multiple functions in responses against both external and internal offenses. In T-cells, functions primarily as a coreceptor for MHC class I molecule:peptide complex. The antigens presented by class I peptides are derived from cytosolic proteins while class II derived from extracellular proteins. Interacts simultaneously with the T-cell receptor (TCR) and the MHC class I proteins presented by antigen presenting cells (APCs). In turn, recruits the Src kinase LCK to the vicinity of the TCR-CD3 complex. A palmitoylation site in the cytoplasmic tail of CD8B chain contributes to partitioning of CD8 into the plasma membrane lipid rafts where signaling proteins are enriched. Once LCK recruited, it initiates different intracellular signaling pathways by phosphorylating various substrates ultimately leading to lymphokine production, motility, adhesion and activation of cytotoxic T-lymphocytes (CTLs). Additionally, plays a critical role in thymic selection of CD8+ T-cells. The protein is T-cell surface glycoprotein CD8 beta chain (CD8B) of Saimiri sciureus (Common squirrel monkey).